Consider the following 93-residue polypeptide: Small ribosomal subunit protein uS19 (93 aa).

This sequence belongs to the universal ribosomal protein uS19 family.

Its function is as follows. Protein S19 forms a complex with S13 that binds strongly to the 16S ribosomal RNA. The sequence is that of Small ribosomal subunit protein uS19 from Synechococcus sp. (strain JA-2-3B'a(2-13)) (Cyanobacteria bacterium Yellowstone B-Prime).